A 624-amino-acid polypeptide reads, in one-letter code: MTMLRKIIGWILLLCIIPLFAFTVIASGKEVKQMKSLDQVLDKNIDLKDISLVQNSYMYDRDGSLVSEIVSDHENRVLVPFNKIPEEVKQIFLTSEDRHFYEHKGFDFMGMVRATASNVKDKKIDQGASTITQQLSRNLYLSHERSFSRKLTELAYSYQLEKKYTKNEILEAYLNTIYFNNGVYGVGSAAQFYFSKPLKSLTVGEMAFICAIPNNPTLYDPLKHFDYTKSRQERLLKGLKDAGVITDKELKKAVKQKIKLDVEKREDKYPDYVSYVNDEFTQLVSESEGFDKRLQKASGKQKEKIENELSARVSTLMKDGVKIYTALDPYMQNQVVAQMNSKLPYADVQGGAAVINHQTHQIIALSGGKNYQKYDFNRAYQAYRQPGSSIKPLLDYGPYIEQTGATTSSTIDASKFCSKDYCPQNYNNRTYGTVTLDTAFKNSYNTPAIRMLDRVGIQKAFSYIEPYHFAKLVDSDYLLPAALGGFTNGMTPLEMTKAYTTFGNSGSYTPSHAITKVTDLKGKTLYKWNDKATQIFSVRTNMQLKKLMSSVVKSGTGKKAYFNAPYIGGKTGTSNDYHDMWFVGLTDTYTMGVWVGKDTPTSVEYLHSISPQLSIWKGTLQAAY.

Positions 1–21 are cleaved as a signal peptide; the sequence is MTMLRKIIGWILLLCIIPLFA. Glu96 functions as the Proton donor; for transglycosylase activity in the catalytic mechanism. Ser388 (acyl-ester intermediate; for transpeptidase activity) is an active-site residue.

This sequence in the N-terminal section; belongs to the glycosyltransferase 51 family. In the C-terminal section; belongs to the transpeptidase family. Post-translationally, the N-terminus is blocked.

Its subcellular location is the cell membrane. It carries out the reaction [GlcNAc-(1-&gt;4)-Mur2Ac(oyl-L-Ala-gamma-D-Glu-L-Lys-D-Ala-D-Ala)](n)-di-trans,octa-cis-undecaprenyl diphosphate + beta-D-GlcNAc-(1-&gt;4)-Mur2Ac(oyl-L-Ala-gamma-D-Glu-L-Lys-D-Ala-D-Ala)-di-trans,octa-cis-undecaprenyl diphosphate = [GlcNAc-(1-&gt;4)-Mur2Ac(oyl-L-Ala-gamma-D-Glu-L-Lys-D-Ala-D-Ala)](n+1)-di-trans,octa-cis-undecaprenyl diphosphate + di-trans,octa-cis-undecaprenyl diphosphate + H(+). It catalyses the reaction Preferential cleavage: (Ac)2-L-Lys-D-Ala-|-D-Ala. Also transpeptidation of peptidyl-alanyl moieties that are N-acyl substituents of D-alanine.. Cell wall formation. Synthesis of cross-linked peptidoglycan from the lipid intermediates. The enzyme has a penicillin-insensitive transglycosylase N-terminal domain (formation of linear glycan strands) and a penicillin-sensitive transpeptidase C-terminal domain (cross-linking of the peptide subunits). Has a partially redundant function with PBP-2A (pbpA) during spore outgrowth. The chain is Penicillin-binding protein 4 from Bacillus subtilis (strain 168).